We begin with the raw amino-acid sequence, 834 residues long: Glycerol-3-phosphate acyltransferase (834 aa).

The HXXXXD motif signature appears at 309–314 (CHRSHI).

The protein belongs to the GPAT/DAPAT family.

Its subcellular location is the cell inner membrane. It catalyses the reaction sn-glycerol 3-phosphate + an acyl-CoA = a 1-acyl-sn-glycero-3-phosphate + CoA. It participates in phospholipid metabolism; CDP-diacylglycerol biosynthesis; CDP-diacylglycerol from sn-glycerol 3-phosphate: step 1/3. The protein is Glycerol-3-phosphate acyltransferase of Pseudomonas aeruginosa (strain LESB58).